Here is a 307-residue protein sequence, read N- to C-terminus: Homoserine O-acetyltransferase (307 aa).

The Acyl-thioester intermediate role is filled by cysteine 142. The substrate site is built by lysine 163 and serine 192. Histidine 235 acts as the Proton acceptor in catalysis. The active site involves glutamate 237. Substrate is bound at residue arginine 249.

The protein belongs to the MetA family.

Its subcellular location is the cytoplasm. The enzyme catalyses L-homoserine + acetyl-CoA = O-acetyl-L-homoserine + CoA. Its pathway is amino-acid biosynthesis; L-methionine biosynthesis via de novo pathway; O-acetyl-L-homoserine from L-homoserine: step 1/1. Functionally, transfers an acetyl group from acetyl-CoA to L-homoserine, forming acetyl-L-homoserine. In Rhizobium johnstonii (strain DSM 114642 / LMG 32736 / 3841) (Rhizobium leguminosarum bv. viciae), this protein is Homoserine O-acetyltransferase.